A 263-amino-acid chain; its full sequence is Hydroxyethylthiazole kinase (263 aa).

A substrate-binding site is contributed by M39. ATP contacts are provided by K115 and T160. G187 serves as a coordination point for substrate.

Belongs to the Thz kinase family. The cofactor is Mg(2+).

It catalyses the reaction 5-(2-hydroxyethyl)-4-methylthiazole + ATP = 4-methyl-5-(2-phosphooxyethyl)-thiazole + ADP + H(+). It functions in the pathway cofactor biosynthesis; thiamine diphosphate biosynthesis; 4-methyl-5-(2-phosphoethyl)-thiazole from 5-(2-hydroxyethyl)-4-methylthiazole: step 1/1. Its function is as follows. Catalyzes the phosphorylation of the hydroxyl group of 4-methyl-5-beta-hydroxyethylthiazole (THZ). This is Hydroxyethylthiazole kinase from Staphylococcus aureus (strain COL).